Consider the following 159-residue polypeptide: Phosphopantetheine adenylyltransferase (159 aa).

T10 is a binding site for substrate. ATP is bound by residues T10 to F11 and H18. Positions 42, 74, and 88 each coordinate substrate. ATP is bound by residues G89 to R91, E99, and F124 to S130.

This sequence belongs to the bacterial CoaD family. As to quaternary structure, homohexamer. Requires Mg(2+) as cofactor.

Its subcellular location is the cytoplasm. It carries out the reaction (R)-4'-phosphopantetheine + ATP + H(+) = 3'-dephospho-CoA + diphosphate. The protein operates within cofactor biosynthesis; coenzyme A biosynthesis; CoA from (R)-pantothenate: step 4/5. Functionally, reversibly transfers an adenylyl group from ATP to 4'-phosphopantetheine, yielding dephospho-CoA (dPCoA) and pyrophosphate. This is Phosphopantetheine adenylyltransferase from Thioalkalivibrio sulfidiphilus (strain HL-EbGR7).